The following is a 772-amino-acid chain: Chondroitin sulfate glucuronyltransferase (772 aa).

The Cytoplasmic segment spans residues M1 to L6. Residues L7 to L29 form a helical; Signal-anchor for type II membrane protein membrane-spanning segment. At R30–T772 the chain is on the lumenal side. N-linked (GlcNAc...) asparagine glycosylation is found at N121 and N342. Residues A629–G662 form a disordered region. The segment covering R634–A652 has biased composition (pro residues).

Belongs to the chondroitin N-acetylgalactosaminyltransferase family. Ubiquitous. Highly expressed in placenta, small intestine and pancreas.

Its subcellular location is the golgi apparatus. It is found in the golgi stack membrane. It carries out the reaction 3-O-(beta-D-GalNAc-(1-&gt;4)-beta-D-GlcA-(1-&gt;3)-beta-D-Gal-(1-&gt;3)-beta-D-Gal-(1-&gt;4)-beta-D-Xyl)-L-seryl-[protein] + UDP-alpha-D-glucuronate = 3-O-(beta-D-GlcA-(1-&gt;3)-beta-D-GalNAc-(1-&gt;4)-beta-D-GlcA-(1-&gt;3)-beta-D-Gal-(1-&gt;3)-beta-D-Gal-(1-&gt;4)-beta-D-Xyl)-L-seryl-[protein] + UDP + H(+). The enzyme catalyses 3-O-{[beta-D-GalNAc-(1-&gt;4)-beta-D-GlcA-(1-&gt;3)](n)-beta-D-GalNAc-(1-&gt;4)-beta-D-GlcA-(1-&gt;3)-beta-D-Gal-(1-&gt;3)-beta-D-Gal-(1-&gt;4)-beta-D-Xyl}-L-seryl-[protein] + UDP-alpha-D-glucuronate = 3-O-{beta-D-GlcA-(1-&gt;3)-[beta-D-GalNAc-(1-&gt;4)-beta-D-GlcA-(1-&gt;3)](n)-beta-D-GalNAc-(1-&gt;4)-beta-D-GlcA-(1-&gt;3)-beta-D-Gal-(1-&gt;3)-beta-D-Gal-(1-&gt;4)-beta-D-Xyl}-L-seryl-[protein] + UDP + H(+). Functionally, transfers glucuronic acid (GlcUA) from UDP-GlcUA to N-acetylgalactosamine residues on the non-reducing end of the elongating chondroitin polymer. Has no N-acetylgalactosaminyltransferase activity. This chain is Chondroitin sulfate glucuronyltransferase (CHPF2), found in Homo sapiens (Human).